Reading from the N-terminus, the 311-residue chain is Nod factor export ATP-binding protein I (311 aa).

Residues 13-243 (IDLAGVSKSY…QIGCPVIEIY (231 aa)) enclose the ABC transporter domain. 45–52 (GPNGAGKS) serves as a coordination point for ATP.

The protein belongs to the ABC transporter superfamily. Lipooligosaccharide exporter (TC 3.A.1.102) family. As to quaternary structure, the complex is composed of two ATP-binding proteins (NodI) and two transmembrane proteins (NodJ).

The protein localises to the cell inner membrane. Part of the ABC transporter complex NodIJ involved in the export of the nodulation factors (Nod factors), the bacterial signal molecules that induce symbiosis and subsequent nodulation induction. Nod factors are LCO (lipo-chitin oligosaccharide), a modified beta-1,4-linked N-acetylglucosamine oligosaccharide. This subunit is responsible for energy coupling to the transport system. In Rhizobium johnstonii (strain DSM 114642 / LMG 32736 / 3841) (Rhizobium leguminosarum bv. viciae), this protein is Nod factor export ATP-binding protein I.